The primary structure comprises 212 residues: Leucyl/phenylalanyl-tRNA--protein transferase (212 aa).

The protein belongs to the L/F-transferase family.

Its subcellular location is the cytoplasm. It carries out the reaction N-terminal L-lysyl-[protein] + L-leucyl-tRNA(Leu) = N-terminal L-leucyl-L-lysyl-[protein] + tRNA(Leu) + H(+). It catalyses the reaction N-terminal L-arginyl-[protein] + L-leucyl-tRNA(Leu) = N-terminal L-leucyl-L-arginyl-[protein] + tRNA(Leu) + H(+). The catalysed reaction is L-phenylalanyl-tRNA(Phe) + an N-terminal L-alpha-aminoacyl-[protein] = an N-terminal L-phenylalanyl-L-alpha-aminoacyl-[protein] + tRNA(Phe). Functions in the N-end rule pathway of protein degradation where it conjugates Leu, Phe and, less efficiently, Met from aminoacyl-tRNAs to the N-termini of proteins containing an N-terminal arginine or lysine. The polypeptide is Leucyl/phenylalanyl-tRNA--protein transferase (Jannaschia sp. (strain CCS1)).